The sequence spans 352 residues: Uroporphyrinogen decarboxylase (352 aa).

Substrate is bound by residues 26-30, D76, Y153, S208, and H323; that span reads RQAGR.

The protein belongs to the uroporphyrinogen decarboxylase family. Homodimer.

Its subcellular location is the cytoplasm. It catalyses the reaction uroporphyrinogen III + 4 H(+) = coproporphyrinogen III + 4 CO2. It functions in the pathway porphyrin-containing compound metabolism; protoporphyrin-IX biosynthesis; coproporphyrinogen-III from 5-aminolevulinate: step 4/4. Catalyzes the decarboxylation of four acetate groups of uroporphyrinogen-III to yield coproporphyrinogen-III. This is Uroporphyrinogen decarboxylase from Prochlorococcus marinus (strain NATL1A).